A 159-amino-acid polypeptide reads, in one-letter code: Capsid protein (159 aa).

N-acetylserine; by host is present on serine 2.

It belongs to the virgaviridae capsid protein family.

The protein localises to the virion. Capsid protein self-assembles to form rod-shaped virions about 18 nm in diameter with a central canal enclosing the viral genomic RNA. In Tobacco mosaic virus (strain Rakkyo) (TMV-R), this protein is Capsid protein (CP).